The chain runs to 207 residues: Large ribosomal subunit protein uL4 (207 aa).

The segment at 49-78 (HAVKNRSAVSGGGRKPWRQKGTGRARQGSI) is disordered.

This sequence belongs to the universal ribosomal protein uL4 family. In terms of assembly, part of the 50S ribosomal subunit.

Functionally, one of the primary rRNA binding proteins, this protein initially binds near the 5'-end of the 23S rRNA. It is important during the early stages of 50S assembly. It makes multiple contacts with different domains of the 23S rRNA in the assembled 50S subunit and ribosome. In terms of biological role, forms part of the polypeptide exit tunnel. The polypeptide is Large ribosomal subunit protein uL4 (Streptococcus equi subsp. zooepidemicus (strain H70)).